Reading from the N-terminus, the 593-residue chain is MDSTFDARASNKSYLGSNSIALTKNFEDWNNEAVCEWLSENNFKMSDIEKFQENKIKGDHLEFIGDKILIQMGLSIYERLSFKSIFKKLKNNNKIKIDSTDNYKNECESNSINNSNNNNNNNNNNNNNNNNNNNNNNNNNNNNNNNNNNNNNNKIDTFNSSIKQLNFSQEANDPNIKAPILDINQYKLIEEIGRGAFSIVEKYENKLKPNEFISIKRINVLASEKEMIVKEINMLYSINHPNIIKIIGYYKDEHYYYIATPYYKKGSIAKIVKSIKSKNNSGFSESNVRNISKKILNAIDYLHSSNPPIVHRDIKGDNILLNDSDEPILADFGLSYLAIENNTNFKTACCSPFWAAPEILNKSTSDFSRKCDIYSFGCTILEMIVGSDPWGGKRNHQSHSPPIPTYLTLECKEVLNETLKYNQNFRADSKQLLEAQWFKETSLRNSSNGEIIFSSEDIMKEFKKNGSTIQIGPVKQEYKYKEQFDIENISKWPREPSFIDPKHKNYKEVLNLYDHYINHSPFMAKIGPYVLDLKEELNEKTFYKSLAISSILGKIDKYEPTTNQNLIPSLFFGFINFVLYQTIKHYPSKFRIL.

The SAM domain occupies 29–93; the sequence is WNNEAVCEWL…SIFKKLKNNN (65 aa). The disordered stretch occupies residues 108-157; the sequence is ESNSINNSNNNNNNNNNNNNNNNNNNNNNNNNNNNNNNNNNNNNNNKIDT. Low complexity predominate over residues 113-153; it reads NNSNNNNNNNNNNNNNNNNNNNNNNNNNNNNNNNNNNNNNN. In terms of domain architecture, Protein kinase spans 186–438; that stretch reads YKLIEEIGRG…SKQLLEAQWF (253 aa). ATP contacts are provided by residues 192-200 and Lys216; that span reads IGRGAFSIV. Asp313 functions as the Proton acceptor in the catalytic mechanism.

This sequence belongs to the protein kinase superfamily. Ser/Thr protein kinase family.

The catalysed reaction is L-seryl-[protein] + ATP = O-phospho-L-seryl-[protein] + ADP + H(+). It catalyses the reaction L-threonyl-[protein] + ATP = O-phospho-L-threonyl-[protein] + ADP + H(+). The protein is Probable serine/threonine-protein kinase samkB (samkB) of Dictyostelium discoideum (Social amoeba).